The sequence spans 254 residues: DNA repair protein RecO (254 aa).

Belongs to the RecO family.

Functionally, involved in DNA repair and RecF pathway recombination. The polypeptide is DNA repair protein RecO (Gluconacetobacter diazotrophicus (strain ATCC 49037 / DSM 5601 / CCUG 37298 / CIP 103539 / LMG 7603 / PAl5)).